A 684-amino-acid polypeptide reads, in one-letter code: Amino-acid acetyltransferase, mitochondrial (684 aa).

Residues 414–439 (PQDATNSASEPRDPSQLSTVATRRKR) form a disordered region. A compositionally biased stretch (polar residues) spans 415-434 (QDATNSASEPRDPSQLSTVA). Residues 505 to 674 (GKSRMTLNDP…YEGVCRGIEP (170 aa)) enclose the N-acetyltransferase domain.

Belongs to the acetyltransferase family.

The protein localises to the mitochondrion. It carries out the reaction L-glutamate + acetyl-CoA = N-acetyl-L-glutamate + CoA + H(+). The protein operates within amino-acid biosynthesis; L-arginine biosynthesis; N(2)-acetyl-L-ornithine from L-glutamate: step 1/4. In terms of biological role, N-acetylglutamate synthase involved in arginine biosynthesis. The polypeptide is Amino-acid acetyltransferase, mitochondrial (ARG2) (Ajellomyces capsulatus (strain NAm1 / WU24) (Darling's disease fungus)).